A 380-amino-acid polypeptide reads, in one-letter code: Cytochrome b (380 aa).

Transmembrane regions (helical) follow at residues 34-54 (FGSL…LLAM), 78-99 (WLIR…YLHI), 114-134 (WNTG…GYVL), and 179-199 (FFAL…IHLT). Heme b is bound by residues histidine 84 and histidine 98. Heme b-binding residues include histidine 183 and histidine 197. Residue histidine 202 coordinates a ubiquinone. The next 4 membrane-spanning stretches (helical) occupy residues 227–247 (LKDI…ALFS), 289–309 (LGGV…PLLH), 321–341 (LSQL…WVGS), and 348–368 (FIII…ILLP).

The protein belongs to the cytochrome b family. As to quaternary structure, the cytochrome bc1 complex contains 11 subunits: 3 respiratory subunits (MT-CYB, CYC1 and UQCRFS1), 2 core proteins (UQCRC1 and UQCRC2) and 6 low-molecular weight proteins (UQCRH/QCR6, UQCRB/QCR7, UQCRQ/QCR8, UQCR10/QCR9, UQCR11/QCR10 and a cleavage product of UQCRFS1). This cytochrome bc1 complex then forms a dimer. The cofactor is heme b.

The protein localises to the mitochondrion inner membrane. Functionally, component of the ubiquinol-cytochrome c reductase complex (complex III or cytochrome b-c1 complex) that is part of the mitochondrial respiratory chain. The b-c1 complex mediates electron transfer from ubiquinol to cytochrome c. Contributes to the generation of a proton gradient across the mitochondrial membrane that is then used for ATP synthesis. The protein is Cytochrome b (MT-CYB) of Pelagodroma marina (White-faced storm-petrel).